A 182-amino-acid chain; its full sequence is ATP-dependent protease subunit HslV (182 aa).

The active site involves Thr12. The Na(+) site is built by Ala167, Cys170, and Thr173.

It belongs to the peptidase T1B family. HslV subfamily. As to quaternary structure, a double ring-shaped homohexamer of HslV is capped on each side by a ring-shaped HslU homohexamer. The assembly of the HslU/HslV complex is dependent on binding of ATP.

The protein localises to the cytoplasm. The catalysed reaction is ATP-dependent cleavage of peptide bonds with broad specificity.. Its activity is regulated as follows. Allosterically activated by HslU binding. Its function is as follows. Protease subunit of a proteasome-like degradation complex believed to be a general protein degrading machinery. This Chlorobium phaeovibrioides (strain DSM 265 / 1930) (Prosthecochloris vibrioformis (strain DSM 265)) protein is ATP-dependent protease subunit HslV.